Consider the following 268-residue polypeptide: Orotidine 5'-phosphate decarboxylase (268 aa).

Substrate is bound by residues Asp-39, 61 to 63, 93 to 102, Tyr-219, and Arg-237; these read KTH and DRKFADIGNT. Lys-95 acts as the Proton donor in catalysis.

The protein belongs to the OMP decarboxylase family.

It carries out the reaction orotidine 5'-phosphate + H(+) = UMP + CO2. Its pathway is pyrimidine metabolism; UMP biosynthesis via de novo pathway; UMP from orotate: step 2/2. The protein is Orotidine 5'-phosphate decarboxylase (URA3) of Pachysolen tannophilus (Yeast).